Here is a 1361-residue protein sequence, read N- to C-terminus: DNA-directed RNA polymerase subunit beta (1361 aa).

This sequence belongs to the RNA polymerase beta chain family. In terms of assembly, the RNAP catalytic core consists of 2 alpha, 1 beta, 1 beta' and 1 omega subunit. When a sigma factor is associated with the core the holoenzyme is formed, which can initiate transcription.

The catalysed reaction is RNA(n) + a ribonucleoside 5'-triphosphate = RNA(n+1) + diphosphate. DNA-dependent RNA polymerase catalyzes the transcription of DNA into RNA using the four ribonucleoside triphosphates as substrates. The sequence is that of DNA-directed RNA polymerase subunit beta from Dichelobacter nodosus (strain VCS1703A).